We begin with the raw amino-acid sequence, 147 residues long: Hemoglobin subunit beta (147 aa).

Valine 2 carries the N-acetylvaline modification. The Globin domain occupies 3–147 (HLSGDEKNAV…VANALAHRYH (145 aa)). Serine 45 carries the post-translational modification Phosphoserine. Lysine 60 is modified (N6-acetyllysine). Heme b is bound at residue histidine 64. Lysine 83 carries the N6-acetyllysine modification. Histidine 93 contacts heme b. Cysteine 94 bears the S-nitrosocysteine mark.

Belongs to the globin family. In terms of assembly, heterotetramer of two alpha chains and two beta chains. As to expression, red blood cells.

In terms of biological role, involved in oxygen transport from the lung to the various peripheral tissues. In Camelus dromedarius (Dromedary), this protein is Hemoglobin subunit beta (HBB).